We begin with the raw amino-acid sequence, 456 residues long: FAD-dependent monooxygenase sor5 (456 aa).

A helical transmembrane segment spans residues 18–38 (PLEVAIVGGGLTGLALALGLL). N43 carries N-linked (GlcNAc...) asparagine glycosylation. The FAD site is built by E48 and R119. Residue R200 is part of the active site. Residues D331 and A344 each contribute to the FAD site.

Belongs to the paxM FAD-dependent monooxygenase family. FAD is required as a cofactor.

It is found in the membrane. The protein operates within secondary metabolite biosynthesis. Functionally, FAD-dependent monooxygenase; part of the SOR gene cluster that mediates the biosynthesis of sorbicillinoids, a diverse group of yellow secondary metabolites that restrict growth of competing pathogenic fungi but not of bacteria. Sorbicillinoids biosynthesis requires the action of two PKSs. The SOR cluster is required for the production of trichodimerol and dihydrotrichotetronin, with sor2 being sufficient for production of trichodimerol, but not dihydrotrichotetronin in the light. Sor1 iteratively combines three acetyl units and the growing chain is modified by the ketoacyl reductase subunit, and optional by the enoyl reductase subunit in the second cycle. The polyketide is then handed over to the PKS sor2, which adds three more acetyl units, and two methyl groups. Sor2 releases an aldehyde, which undergoes spontaneous cyclization resulting in the formation of sorbicillin or 2',3'-dihydrosorbicillin. The monooxygenase sor5 oxidizes sorbicillin and 2',3'-dihydrosorbicillin to 2',3'-dihydrosorbicillinol and sorbicillinol, respectively. The oxidoreductase sor8 further converts sorbicillinol into oxosorbicillinol. Sorbicillinol is the building block for the other sorbicillinoids such as disorbicillinol, bisvertinolon, dihydrobisvertinolone, and dihydrotrichotetronine. The sequence is that of FAD-dependent monooxygenase sor5 from Hypocrea jecorina (strain QM6a) (Trichoderma reesei).